We begin with the raw amino-acid sequence, 397 residues long: Acetyl-CoA acetyltransferase, cytosolic (397 aa).

Met-1 carries the N-acetylmethionine modification. Residue Cys-92 is the Acyl-thioester intermediate of the active site. At Lys-200 the chain carries N6-acetyllysine. CoA-binding residues include Arg-223 and Ser-226. Lys-233 and Lys-235 each carry N6-acetyllysine. Ser-252 serves as a coordination point for CoA. Cys-383 (proton donor/acceptor) is an active-site residue.

This sequence belongs to the thiolase-like superfamily. Thiolase family. As to quaternary structure, homotetramer.

Its subcellular location is the cytoplasm. The protein resides in the cytosol. The catalysed reaction is 2 acetyl-CoA = acetoacetyl-CoA + CoA. It functions in the pathway lipid metabolism; fatty acid metabolism. In terms of biological role, involved in the biosynthetic pathway of cholesterol. The polypeptide is Acetyl-CoA acetyltransferase, cytosolic (Acat2) (Rattus norvegicus (Rat)).